The chain runs to 299 residues: GTPase Era (299 aa).

The 168-residue stretch at 5–172 (KSGFVSIIGR…IDVLKSFLPE (168 aa)) folds into the Era-type G domain. The segment at 13-20 (GRPNVGKS) is G1. 13–20 (GRPNVGKS) lines the GTP pocket. The G2 stretch occupies residues 39 to 43 (QTTRN). The G3 stretch occupies residues 60–63 (DTPG). GTP contacts are provided by residues 60–64 (DTPGI) and 122–125 (NKID). Positions 122–125 (NKID) are G4. Residues 151–153 (ISA) are G5. The KH type-2 domain maps to 203 to 280 (TSEEIPHAIG…YLELWVKVQR (78 aa)).

This sequence belongs to the TRAFAC class TrmE-Era-EngA-EngB-Septin-like GTPase superfamily. Era GTPase family. As to quaternary structure, monomer.

The protein localises to the cytoplasm. It is found in the cell membrane. In terms of biological role, an essential GTPase that binds both GDP and GTP, with rapid nucleotide exchange. Plays a role in 16S rRNA processing and 30S ribosomal subunit biogenesis and possibly also in cell cycle regulation and energy metabolism. This chain is GTPase Era, found in Staphylococcus epidermidis (strain ATCC 12228 / FDA PCI 1200).